The primary structure comprises 248 residues: MNVLISNDDGYLSEGIAVLARVTAEFANVRVVAPERDRSGVSNSLTLERPLQLKQAQNGFYYVNGTPTDCIHIGQSVFSDFQADFVFSGINRGANMGDDTLYSGTVAAATEAYLMGIPAVAFSLNDASGRYWATAEQALWTLLAHFFKTPPQSPILWNINIPAVAPEDVRGIKIARLGRRHHGQNVIPARNPRGEQIYWIGPVGEVSDREEGTDFGECGAGFITVTPLQIDLTAYPDMAETAAFWHAD.

The a divalent metal cation site is built by Asp8, Asp9, Ser39, and Asn91.

It belongs to the SurE nucleotidase family. The cofactor is a divalent metal cation.

The protein resides in the cytoplasm. It catalyses the reaction a ribonucleoside 5'-phosphate + H2O = a ribonucleoside + phosphate. Nucleotidase that shows phosphatase activity on nucleoside 5'-monophosphates. In Neisseria meningitidis serogroup C (strain 053442), this protein is 5'-nucleotidase SurE.